A 550-amino-acid polypeptide reads, in one-letter code: tRNA modification GTPase MnmE (550 aa).

Residues Arg20, Glu78, and Arg116 each coordinate (6S)-5-formyl-5,6,7,8-tetrahydrofolate. The TrmE-type G domain maps to 212-478 (GFSVVIVGKP…LLDKIFDIIS (267 aa)). Asn222 serves as a coordination point for K(+). Residues 222 to 227 (NVGKST), 241 to 247 (TDIPGTT), and 266 to 269 (DTAG) contribute to the GTP site. A Mg(2+)-binding site is contributed by Ser226. K(+) is bound by residues Thr241, Ile243, and Thr246. Thr247 contacts Mg(2+). Residue Lys550 participates in (6S)-5-formyl-5,6,7,8-tetrahydrofolate binding.

This sequence belongs to the TRAFAC class TrmE-Era-EngA-EngB-Septin-like GTPase superfamily. TrmE GTPase family. As to quaternary structure, homodimer. Heterotetramer of two MnmE and two MnmG subunits. Requires K(+) as cofactor.

Its subcellular location is the cytoplasm. Functionally, exhibits a very high intrinsic GTPase hydrolysis rate. Involved in the addition of a carboxymethylaminomethyl (cmnm) group at the wobble position (U34) of certain tRNAs, forming tRNA-cmnm(5)s(2)U34. This Neorickettsia sennetsu (strain ATCC VR-367 / Miyayama) (Ehrlichia sennetsu) protein is tRNA modification GTPase MnmE.